The sequence spans 100 residues: MSRVCDITGQGKSFGNKVSHSNRKTKRAYLVNLHNVTLVSDILNRKFKFKVSSRTLRTVNYKGGLDLYLLNTSSRKLTDKAQKIKKLVKNAVAKGVKVSL.

It belongs to the bacterial ribosomal protein bL28 family.

This chain is Large ribosomal subunit protein bL28, found in Ehrlichia chaffeensis (strain ATCC CRL-10679 / Arkansas).